The primary structure comprises 1066 residues: Isoleucine--tRNA ligase (1066 aa).

The 'HIGH' region signature appears at 49–59 (PYVSGAIHLGT). The 'KMSKS' region motif lies at 625 to 629 (KMSKS). ATP is bound at residue Lys628.

Belongs to the class-I aminoacyl-tRNA synthetase family. IleS type 2 subfamily. In terms of assembly, monomer. Zn(2+) is required as a cofactor.

Its subcellular location is the cytoplasm. It catalyses the reaction tRNA(Ile) + L-isoleucine + ATP = L-isoleucyl-tRNA(Ile) + AMP + diphosphate. Catalyzes the attachment of isoleucine to tRNA(Ile). As IleRS can inadvertently accommodate and process structurally similar amino acids such as valine, to avoid such errors it has two additional distinct tRNA(Ile)-dependent editing activities. One activity is designated as 'pretransfer' editing and involves the hydrolysis of activated Val-AMP. The other activity is designated 'posttransfer' editing and involves deacylation of mischarged Val-tRNA(Ile). The protein is Isoleucine--tRNA ligase of Pyrococcus furiosus (strain ATCC 43587 / DSM 3638 / JCM 8422 / Vc1).